Consider the following 189-residue polypeptide: Auxin-responsive protein IAA6 (189 aa).

An EAR-like (transcriptional repression) motif is present at residues 13 to 17 (LRLGL). The 86-residue stretch at 93–178 (IGYVKVSMDG…SCKRLRIVKR (86 aa)) folds into the PB1 domain.

Belongs to the Aux/IAA family. In terms of assembly, homodimers and heterodimers. Interacts with TPL. As to expression, highly expressed in stems and flowers.

It is found in the nucleus. Functionally, aux/IAA proteins are short-lived transcriptional factors that function as repressors of early auxin response genes at low auxin concentrations. Repression is thought to result from the interaction with auxin response factors (ARFs), proteins that bind to the auxin-responsive promoter element (AuxRE). Formation of heterodimers with ARF proteins may alter their ability to modulate early auxin response genes expression. The sequence is that of Auxin-responsive protein IAA6 (IAA6) from Arabidopsis thaliana (Mouse-ear cress).